The primary structure comprises 277 residues: NADPH-dependent 7-cyano-7-deazaguanine reductase (277 aa).

83–85 (VES) provides a ligand contact to substrate. Residue 85 to 86 (SK) coordinates NADPH. Cys184 serves as the catalytic Thioimide intermediate. Asp191 acts as the Proton donor in catalysis. 223–224 (HE) is a binding site for substrate. Residue 252–253 (RG) participates in NADPH binding.

Belongs to the GTP cyclohydrolase I family. QueF type 2 subfamily. As to quaternary structure, homodimer.

It localises to the cytoplasm. The catalysed reaction is 7-aminomethyl-7-carbaguanine + 2 NADP(+) = 7-cyano-7-deazaguanine + 2 NADPH + 3 H(+). It functions in the pathway tRNA modification; tRNA-queuosine biosynthesis. Catalyzes the NADPH-dependent reduction of 7-cyano-7-deazaguanine (preQ0) to 7-aminomethyl-7-deazaguanine (preQ1). The polypeptide is NADPH-dependent 7-cyano-7-deazaguanine reductase (Ralstonia nicotianae (strain ATCC BAA-1114 / GMI1000) (Ralstonia solanacearum)).